The following is a 235-amino-acid chain: Phosphoglycolate phosphatase (235 aa).

The Nucleophile role is filled by aspartate 14. Residues aspartate 14, aspartate 16, and aspartate 177 each contribute to the Mg(2+) site.

This sequence belongs to the HAD-like hydrolase superfamily. CbbY/CbbZ/Gph/YieH family. The cofactor is Mg(2+).

The catalysed reaction is 2-phosphoglycolate + H2O = glycolate + phosphate. The protein operates within organic acid metabolism; glycolate biosynthesis; glycolate from 2-phosphoglycolate: step 1/1. In terms of biological role, specifically catalyzes the dephosphorylation of 2-phosphoglycolate. Is involved in the dissimilation of the intracellular 2-phosphoglycolate formed during the DNA repair of 3'-phosphoglycolate ends, a major class of DNA lesions induced by oxidative stress. The sequence is that of Phosphoglycolate phosphatase from Neisseria meningitidis serogroup A / serotype 4A (strain DSM 15465 / Z2491).